We begin with the raw amino-acid sequence, 453 residues long: MNGLLASDKYVVIVGLGATGLSVARYLHLRGERFSVVDTREHPPGADELMALNNKVDHHFGAVEQPQIDLLLNAAEIVLSPGVDRRTDFIQAALKNNISIVGDIELFLREVQVPVVGITGSNGKSTVTALMAAVGAKAGFKTCAAGNIGLPVLDALQENAELYILELSSFQLESVSRPGLTVACMLNVSEDHMDRYNRFVDYCMAKQRIYFGAQNVVYNIDDKLTQPPIVDGVARRGFSLSKPIEEGESAFYFSADTGNLCAAKDNLINIDQIKIFGRHNVANVLAVFAMADALNITRAATCAAVQEFSGLDHRCQWVAKKRGVTFINDSKATNVGAAQAAIAGLSASFKRILLIAGGDGKDANFFSFGKLVDAHVAVLILMGRDAGAIADCVSDTTPVVQAQTMTEAVEVAFSSAEEGDLVLLSPACASFDMFAGFEDRGRQFAAAVEGLTE.

120 to 126 (GSNGKST) provides a ligand contact to ATP.

It belongs to the MurCDEF family.

It is found in the cytoplasm. The catalysed reaction is UDP-N-acetyl-alpha-D-muramoyl-L-alanine + D-glutamate + ATP = UDP-N-acetyl-alpha-D-muramoyl-L-alanyl-D-glutamate + ADP + phosphate + H(+). It participates in cell wall biogenesis; peptidoglycan biosynthesis. Functionally, cell wall formation. Catalyzes the addition of glutamate to the nucleotide precursor UDP-N-acetylmuramoyl-L-alanine (UMA). In Teredinibacter turnerae (strain ATCC 39867 / T7901), this protein is UDP-N-acetylmuramoylalanine--D-glutamate ligase.